A 209-amino-acid polypeptide reads, in one-letter code: Eukaryotic translation initiation factor 4E (209 aa).

Belongs to the eukaryotic initiation factor 4E family. As to quaternary structure, eIF4F is a multi-subunit complex, the composition of which varies with external and internal environmental conditions. It is composed of at least eIF4A, eIF4E and eIF4G. eIF4E is also known to interact with other partners.

In terms of biological role, recognizes and binds the 7-methylguanosine-containing mRNA cap during an early step in the initiation of protein synthesis and facilitates ribosome binding by inducing the unwinding of the mRNAs secondary structures. In Candida glabrata (strain ATCC 2001 / BCRC 20586 / JCM 3761 / NBRC 0622 / NRRL Y-65 / CBS 138) (Yeast), this protein is Eukaryotic translation initiation factor 4E (TIF45).